The following is a 231-amino-acid chain: Class II histocompatibility antigen, B-L beta chain (231 aa).

The beta-1 stretch occupies residues 1–89 (FFQWSATVEC…IVAPLTLQRR (89 aa)). The Extracellular portion of the chain corresponds to 1–194 (FFQWSATVEC…PGDVSRSKLL (194 aa)). 2 cysteine pairs are disulfide-bonded: cysteine 10–cysteine 74 and cysteine 111–cysteine 167. N-linked (GlcNAc...) asparagine glycosylation occurs at asparagine 14. Positions 90 to 182 (EPKVRIFALQ…SLQQPITQRW (93 aa)) are beta-2. The Ig-like C1-type domain occupies 91–179 (PKVRIFALQS…EHTSLQQPIT (89 aa)). The segment at 183 to 194 (EPPGDVSRSKLL) is connecting peptide. A helical transmembrane segment spans residues 195 to 219 (MGVGGFVLGLVYLALGIFFFLCSKK). Residues 220–231 (GQPDPTSPGILN) lie on the Cytoplasmic side of the membrane.

Belongs to the MHC class II family.

It is found in the membrane. The polypeptide is Class II histocompatibility antigen, B-L beta chain (Gallus gallus (Chicken)).